A 209-amino-acid chain; its full sequence is Large ribosomal subunit protein uL4 (209 aa).

The interval Gln44 to Asp77 is disordered.

This sequence belongs to the universal ribosomal protein uL4 family. In terms of assembly, part of the 50S ribosomal subunit.

Functionally, one of the primary rRNA binding proteins, this protein initially binds near the 5'-end of the 23S rRNA. It is important during the early stages of 50S assembly. It makes multiple contacts with different domains of the 23S rRNA in the assembled 50S subunit and ribosome. Forms part of the polypeptide exit tunnel. The sequence is that of Large ribosomal subunit protein uL4 from Parabacteroides distasonis (strain ATCC 8503 / DSM 20701 / CIP 104284 / JCM 5825 / NCTC 11152).